The following is an 894-amino-acid chain: Cell wall-associated protease (894 aa).

The signal sequence occupies residues 1 to 31; the sequence is MKRRKFSSVVAAVLIFALIFSLFSPGTKAAA. A Peptidase S8 domain is found at 422-729; it reads QWPLKNNGEN…YGRLNVMKAV (308 aa). Active-site charge relay system residues include aspartate 462, histidine 497, and serine 650.

It belongs to the peptidase S8 family. Post-translationally, proteolytically cleaved to yield CWBP23 and CWBP52.

The protein localises to the secreted. It is found in the cell wall. Inhibited by PMSF. In terms of biological role, CWBP52 is a serine-type protease that could be involved in proteoglycan peptide bridges. This is Cell wall-associated protease (wprA) from Bacillus subtilis (strain 168).